Reading from the N-terminus, the 388-residue chain is Succinate--CoA ligase [ADP-forming] subunit beta (388 aa).

An ATP-grasp domain is found at 9-244; it reads KQIFAKYKLP…PSQDDPREAL (236 aa). ATP-binding positions include Lys-46, 53–55, Glu-99, Ala-102, and Glu-107; that span reads GRG. Asn-199 and Asp-213 together coordinate Mg(2+). Substrate is bound by residues Asn-264 and 321-323; that span reads GIV.

The protein belongs to the succinate/malate CoA ligase beta subunit family. In terms of assembly, heterotetramer of two alpha and two beta subunits. It depends on Mg(2+) as a cofactor.

The catalysed reaction is succinate + ATP + CoA = succinyl-CoA + ADP + phosphate. The enzyme catalyses GTP + succinate + CoA = succinyl-CoA + GDP + phosphate. The protein operates within carbohydrate metabolism; tricarboxylic acid cycle; succinate from succinyl-CoA (ligase route): step 1/1. In terms of biological role, succinyl-CoA synthetase functions in the citric acid cycle (TCA), coupling the hydrolysis of succinyl-CoA to the synthesis of either ATP or GTP and thus represents the only step of substrate-level phosphorylation in the TCA. The beta subunit provides nucleotide specificity of the enzyme and binds the substrate succinate, while the binding sites for coenzyme A and phosphate are found in the alpha subunit. The polypeptide is Succinate--CoA ligase [ADP-forming] subunit beta (Glaesserella parasuis serovar 5 (strain SH0165) (Haemophilus parasuis)).